The chain runs to 253 residues: tRNA uridine(34) hydroxylase (253 aa).

The Rhodanese domain maps to 127-221 (HGRPLVLLDT…YFEDVGGEGY (95 aa)). The active-site Cysteine persulfide intermediate is the Cys181.

The protein belongs to the TrhO family.

The enzyme catalyses uridine(34) in tRNA + AH2 + O2 = 5-hydroxyuridine(34) in tRNA + A + H2O. Its function is as follows. Catalyzes oxygen-dependent 5-hydroxyuridine (ho5U) modification at position 34 in tRNAs. In Xanthomonas campestris pv. campestris (strain 8004), this protein is tRNA uridine(34) hydroxylase.